An 801-amino-acid chain; its full sequence is Protocadherin beta-8 (801 aa).

A signal peptide spans 1 to 29; sequence MEASGKLICRQRQVLFSFLLLGLSLAGAA. The Extracellular portion of the chain corresponds to 30–691; sequence EPRSYSVVEE…GQADSLTVYL (662 aa). 5 Cadherin domains span residues 36 to 134, 139 to 243, 248 to 348, 353 to 452, and 457 to 562; these read VVEE…SPVF, MLVK…APEF, YRVQ…APEV, FTSP…APAF, and YTLF…SPFV. An intrachain disulfide couples C97 to C103. 2 N-linked (GlcNAc...) asparagine glycosylation sites follow: N419 and N437. N568 is a glycosylation site (N-linked (GlcNAc...) asparagine). Residues 569–672 form the Cadherin 6 domain; the sequence is GSAPCTELVP…LVDGFSQPYL (104 aa). A helical transmembrane segment spans residues 692 to 710; it reads VVALASVSSLFLFSVLLFV. Residues 711-801 are Cytoplasmic-facing; the sequence is AVLLCRRSRA…NGFGFSLQLK (91 aa).

In terms of assembly, forms homodimers in trans (molecules expressed by two different cells). Forms promiscuous heterodimers in cis (at the plasma membrane of the same cell) with other protocadherins.

Its subcellular location is the cell membrane. Functionally, calcium-dependent cell-adhesion protein involved in cells self-recognition and non-self discrimination. Thereby, it is involved in the establishment and maintenance of specific neuronal connections in the brain. The protein is Protocadherin beta-8 of Homo sapiens (Human).